The following is a 271-amino-acid chain: MFSIQQPLLVFSDLDGTLLDSHSYDWQPAAPWLSRLHEANIPVILCSSKTSAEMLYLQKMLGLQGLPLIAENGAVIQLAEQWQDIDGFPRIISGISHGEICQVLNTLREKEHFKFTTFDDVDDATIAEWTGLSRSQAALTQLHEASVTLIWRDSDEHMAQFIARLNELGLQFMQGARFWHVLDASAGKDQAANWIIATYQQLSGRRPTTLGLGDGPNDAPLLEVMDYAVIVKGLNREGVHLHDEDPARVWRTQREGPEGWREGLDHFFSAR.

D13 functions as the Nucleophile in the catalytic mechanism. Mg(2+) contacts are provided by D13, D15, and D214.

It belongs to the HAD-like hydrolase superfamily. MPGP family. The cofactor is Mg(2+).

It localises to the cytoplasm. The enzyme catalyses 2-O-(alpha-D-mannosyl)-3-phosphoglycerate + H2O = (2R)-2-O-(alpha-D-mannosyl)-glycerate + phosphate. The protein is Mannosyl-3-phosphoglycerate phosphatase (yedP) of Escherichia coli O6:K15:H31 (strain 536 / UPEC).